Consider the following 159-residue polypeptide: 2-C-methyl-D-erythritol 2,4-cyclodiphosphate synthase (159 aa).

Residues Asp-10 and His-12 each coordinate a divalent metal cation. Residues 10-12 and 36-37 contribute to the 4-CDP-2-C-methyl-D-erythritol 2-phosphate site; these read DVH and HS. His-44 contributes to the a divalent metal cation binding site. 4-CDP-2-C-methyl-D-erythritol 2-phosphate contacts are provided by residues 58–60, 134–137, Phe-141, and Arg-144; these read DIG and TTTE.

Belongs to the IspF family. Homotrimer. The cofactor is a divalent metal cation.

The catalysed reaction is 4-CDP-2-C-methyl-D-erythritol 2-phosphate = 2-C-methyl-D-erythritol 2,4-cyclic diphosphate + CMP. It functions in the pathway isoprenoid biosynthesis; isopentenyl diphosphate biosynthesis via DXP pathway; isopentenyl diphosphate from 1-deoxy-D-xylulose 5-phosphate: step 4/6. Involved in the biosynthesis of isopentenyl diphosphate (IPP) and dimethylallyl diphosphate (DMAPP), two major building blocks of isoprenoid compounds. Catalyzes the conversion of 4-diphosphocytidyl-2-C-methyl-D-erythritol 2-phosphate (CDP-ME2P) to 2-C-methyl-D-erythritol 2,4-cyclodiphosphate (ME-CPP) with a corresponding release of cytidine 5-monophosphate (CMP). This is 2-C-methyl-D-erythritol 2,4-cyclodiphosphate synthase from Bacteroides thetaiotaomicron (strain ATCC 29148 / DSM 2079 / JCM 5827 / CCUG 10774 / NCTC 10582 / VPI-5482 / E50).